A 431-amino-acid polypeptide reads, in one-letter code: Fibrinogen C domain-containing protein 1 (431 aa).

Topologically, residues 1–3 are cytoplasmic; it reads MLC. Residues 4 to 24 form a helical; Signal-anchor for type II membrane protein membrane-spanning segment; sequence TVLLALAVLLAVAVTGAVLFL. Over 25–431 the chain is Extracellular; that stretch reads NHTHTPGTAP…MKIRPVREDR (407 aa). The 224-residue stretch at 205–428 folds into the Fibrinogen C-terminal domain; the sequence is CATGSRPRDC…FSEMKIRPVR (224 aa). The cysteines at positions 214 and 243 are disulfide-linked. Asparagine 310 carries an N-linked (GlcNAc...) asparagine glycan. 2 residues coordinate Ca(2+): aspartate 363 and aspartate 365. A disulfide bond links cysteine 371 and cysteine 384.

In terms of assembly, homotetramer; disulfide-linked.

It is found in the membrane. In terms of biological role, acetyl group-binding receptor which shows a high-affinity and calcium-dependent binding to acetylated structures such as chitin, some N-acetylated carbohydrates, and amino acids, but not to their non-acetylated counterparts. Can facilitate the endocytosis of acetylated components. The protein is Fibrinogen C domain-containing protein 1 (FIBCD1) of Macaca fascicularis (Crab-eating macaque).